Here is a 289-residue protein sequence, read N- to C-terminus: ATP phosphoribosyltransferase (289 aa).

It belongs to the ATP phosphoribosyltransferase family. Long subfamily. Requires Mg(2+) as cofactor.

The protein localises to the cytoplasm. The enzyme catalyses 1-(5-phospho-beta-D-ribosyl)-ATP + diphosphate = 5-phospho-alpha-D-ribose 1-diphosphate + ATP. The protein operates within amino-acid biosynthesis; L-histidine biosynthesis; L-histidine from 5-phospho-alpha-D-ribose 1-diphosphate: step 1/9. With respect to regulation, feedback inhibited by histidine. Its function is as follows. Catalyzes the condensation of ATP and 5-phosphoribose 1-diphosphate to form N'-(5'-phosphoribosyl)-ATP (PR-ATP). Has a crucial role in the pathway because the rate of histidine biosynthesis seems to be controlled primarily by regulation of HisG enzymatic activity. The chain is ATP phosphoribosyltransferase from Solibacter usitatus (strain Ellin6076).